The sequence spans 726 residues: Catalase-peroxidase (726 aa).

The disordered stretch occupies residues 1-33 (MSTTDDTHNTLSTGKCPFHQGGHDRSAGAGTAS). Residues 105–226 (WHGAGTYRSI…LGATEMGLIY (122 aa)) constitute a cross-link (tryptophyl-tyrosyl-methioninium (Trp-Tyr) (with M-252)). His-106 (proton acceptor) is an active-site residue. The tryptophyl-tyrosyl-methioninium (Tyr-Met) (with W-105) cross-link spans 226–252 (YVNPEGPDHSGEPLSAAAAIRATFGNM). His-267 provides a ligand contact to heme b.

This sequence belongs to the peroxidase family. Peroxidase/catalase subfamily. As to quaternary structure, homodimer or homotetramer. Heme b serves as cofactor. Formation of the three residue Trp-Tyr-Met cross-link is important for the catalase, but not the peroxidase activity of the enzyme.

The enzyme catalyses H2O2 + AH2 = A + 2 H2O. It carries out the reaction 2 H2O2 = O2 + 2 H2O. Bifunctional enzyme with both catalase and broad-spectrum peroxidase activity. The sequence is that of Catalase-peroxidase from Salmonella paratyphi B (strain ATCC BAA-1250 / SPB7).